The chain runs to 524 residues: Thioredoxin reductase 2, mitochondrial (524 aa).

Residues 1 to 36 (MAAMAVALRGLGGRFRWRTQAVAGGVRGAARGAAAG) constitute a mitochondrion transit peptide. 41 to 70 (DLLVVGGGSGGLACAKEAAQLGRKVAVVDY) lines the FAD pocket. C86 and C91 are joined by a disulfide. An N6-succinyllysine mark is found at K175 and K329. The active-site Proton acceptor is the H497. Residues 522 to 523 (CU) constitute a cross-link (cysteinyl-selenocysteine (Cys-Sec)). U523 is a non-standard amino acid (selenocysteine).

It belongs to the class-I pyridine nucleotide-disulfide oxidoreductase family. In terms of assembly, homodimer. FAD serves as cofactor. Highly expressed in the prostate, ovary, liver, testis, uterus, colon and small intestine. Intermediate levels in brain, skeletal muscle, heart and spleen. Low levels in placenta, pancreas, thymus and peripheral blood leukocytes. According to PubMed:10608886, high levels in kidney, whereas according to PubMed:9923614, levels are low. High expression is observed in the adrenal cortex.

The protein resides in the mitochondrion. The enzyme catalyses [thioredoxin]-dithiol + NADP(+) = [thioredoxin]-disulfide + NADPH + H(+). Its function is as follows. Involved in the control of reactive oxygen species levels and the regulation of mitochondrial redox homeostasis. Maintains thioredoxin in a reduced state. May play a role in redox-regulated cell signaling. The protein is Thioredoxin reductase 2, mitochondrial of Homo sapiens (Human).